A 683-amino-acid polypeptide reads, in one-letter code: Dynein, 78 kDa intermediate chain, flagellar outer arm (683 aa).

The segment at 1–42 is disordered; it reads MPALSPAKKGTDKGKTGKKTGKQEQNAQDYIPPPPPMPGDEA. 4 WD repeats span residues 358-398, 407-450, 562-602, and 608-647; these read HTES…DEPI, KLND…LIPE, DLND…LLPL, and VKKA…RITS.

The protein belongs to the dynein intermediate chain family. As to quaternary structure, consists of at least 3 heavy chains (alpha, beta and gamma), 2 intermediate chains and 8 light chains.

It is found in the cytoplasm. The protein resides in the cytoskeleton. The protein localises to the flagellum axoneme. Is essential for arm assembly or attachment to the outer doublet microtubule. This Chlamydomonas reinhardtii (Chlamydomonas smithii) protein is Dynein, 78 kDa intermediate chain, flagellar outer arm (ODA9).